Here is a 305-residue protein sequence, read N- to C-terminus: Aspartate carbamoyltransferase catalytic subunit (305 aa).

Carbamoyl phosphate contacts are provided by Arg-53 and Thr-54. Lys-82 contacts L-aspartate. Positions 103, 131, and 134 each coordinate carbamoyl phosphate. 2 residues coordinate L-aspartate: Arg-164 and Arg-226. Carbamoyl phosphate is bound by residues Leu-265 and Pro-266.

Belongs to the aspartate/ornithine carbamoyltransferase superfamily. ATCase family. In terms of assembly, heterooligomer of catalytic and regulatory chains.

The enzyme catalyses carbamoyl phosphate + L-aspartate = N-carbamoyl-L-aspartate + phosphate + H(+). Its pathway is pyrimidine metabolism; UMP biosynthesis via de novo pathway; (S)-dihydroorotate from bicarbonate: step 2/3. Its function is as follows. Catalyzes the condensation of carbamoyl phosphate and aspartate to form carbamoyl aspartate and inorganic phosphate, the committed step in the de novo pyrimidine nucleotide biosynthesis pathway. The chain is Aspartate carbamoyltransferase catalytic subunit from Ignicoccus hospitalis (strain KIN4/I / DSM 18386 / JCM 14125).